A 247-amino-acid chain; its full sequence is Segregation and condensation protein A (247 aa).

It belongs to the ScpA family. Component of a cohesin-like complex composed of ScpA, ScpB and the Smc homodimer, in which ScpA and ScpB bind to the head domain of Smc. The presence of the three proteins is required for the association of the complex with DNA.

The protein resides in the cytoplasm. Participates in chromosomal partition during cell division. May act via the formation of a condensin-like complex containing Smc and ScpB that pull DNA away from mid-cell into both cell halves. This is Segregation and condensation protein A from Lactobacillus johnsonii (strain CNCM I-12250 / La1 / NCC 533).